The sequence spans 239 residues: MEFFNILQSACNDVNLDFNDKKYNQFISYKNLIQEWNKKINLTAIVEDEEIIKKHFIDCIKIFKSSPIGEAKSLIDIGTGAGFPGIPIKILKEDIEITLLDSLQKRINFLNIVIGELQLKNIQCLHGRAEDYAQEIQHRQKYDIAVSRAVANLAVLSEFCIPFVEKGGYFIAMKGPSVEEEITAATKSIEILGGKIEDIMKIDIEDTDLKHNLVIIKKVRETGKRYPRKPGIIKKNPLK.

S-adenosyl-L-methionine-binding positions include Gly-78, Phe-83, Ala-129–Glu-130, and Arg-148.

It belongs to the methyltransferase superfamily. RNA methyltransferase RsmG family.

It localises to the cytoplasm. Its function is as follows. Specifically methylates the N7 position of a guanine in 16S rRNA. This Clostridium botulinum (strain 657 / Type Ba4) protein is Ribosomal RNA small subunit methyltransferase G.